A 207-amino-acid polypeptide reads, in one-letter code: Adenine phosphoribosyltransferase (207 aa).

A disordered region spans residues methionine 1–alanine 33.

This sequence belongs to the purine/pyrimidine phosphoribosyltransferase family. As to quaternary structure, homodimer.

It localises to the cytoplasm. The enzyme catalyses AMP + diphosphate = 5-phospho-alpha-D-ribose 1-diphosphate + adenine. It participates in purine metabolism; AMP biosynthesis via salvage pathway; AMP from adenine: step 1/1. Catalyzes a salvage reaction resulting in the formation of AMP, that is energically less costly than de novo synthesis. The polypeptide is Adenine phosphoribosyltransferase (Corynebacterium jeikeium (strain K411)).